The primary structure comprises 302 residues: Methionyl-tRNA formyltransferase (302 aa).

108 to 111 (SLLP) contributes to the (6S)-5,6,7,8-tetrahydrofolate binding site. Positions 276–288 (REGKRPMEPEEFL) are enriched in basic and acidic residues. The disordered stretch occupies residues 276–302 (REGKRPMEPEEFLRGFPLPEGSRAHTA).

This sequence belongs to the Fmt family.

The enzyme catalyses L-methionyl-tRNA(fMet) + (6R)-10-formyltetrahydrofolate = N-formyl-L-methionyl-tRNA(fMet) + (6S)-5,6,7,8-tetrahydrofolate + H(+). Functionally, attaches a formyl group to the free amino group of methionyl-tRNA(fMet). The formyl group appears to play a dual role in the initiator identity of N-formylmethionyl-tRNA by promoting its recognition by IF2 and preventing the misappropriation of this tRNA by the elongation apparatus. This is Methionyl-tRNA formyltransferase from Cereibacter sphaeroides (strain KD131 / KCTC 12085) (Rhodobacter sphaeroides).